The primary structure comprises 236 residues: Phosphatidylserine decarboxylase proenzyme (236 aa).

S203 (schiff-base intermediate with substrate; via pyruvic acid) is an active-site residue. Position 203 is a pyruvic acid (Ser); by autocatalysis (S203).

It belongs to the phosphatidylserine decarboxylase family. PSD-A subfamily. In terms of assembly, heterodimer of a large membrane-associated beta subunit and a small pyruvoyl-containing alpha subunit. Pyruvate is required as a cofactor. Is synthesized initially as an inactive proenzyme. Formation of the active enzyme involves a self-maturation process in which the active site pyruvoyl group is generated from an internal serine residue via an autocatalytic post-translational modification. Two non-identical subunits are generated from the proenzyme in this reaction, and the pyruvate is formed at the N-terminus of the alpha chain, which is derived from the carboxyl end of the proenzyme. The post-translation cleavage follows an unusual pathway, termed non-hydrolytic serinolysis, in which the side chain hydroxyl group of the serine supplies its oxygen atom to form the C-terminus of the beta chain, while the remainder of the serine residue undergoes an oxidative deamination to produce ammonia and the pyruvoyl prosthetic group on the alpha chain.

It localises to the cell membrane. It catalyses the reaction a 1,2-diacyl-sn-glycero-3-phospho-L-serine + H(+) = a 1,2-diacyl-sn-glycero-3-phosphoethanolamine + CO2. Its pathway is phospholipid metabolism; phosphatidylethanolamine biosynthesis; phosphatidylethanolamine from CDP-diacylglycerol: step 2/2. Its function is as follows. Catalyzes the formation of phosphatidylethanolamine (PtdEtn) from phosphatidylserine (PtdSer). The sequence is that of Phosphatidylserine decarboxylase proenzyme from Saccharopolyspora erythraea (strain ATCC 11635 / DSM 40517 / JCM 4748 / NBRC 13426 / NCIMB 8594 / NRRL 2338).